The following is a 175-amino-acid chain: uncharacterized protein (175 aa).

2 helical membrane-spanning segments follow: residues 21–41 (IVLD…MGPI) and 50–70 (LVGL…VFVI).

It is found in the membrane. This is an uncharacterized protein from Saccharomyces cerevisiae (strain ATCC 204508 / S288c) (Baker's yeast).